Here is a 260-residue protein sequence, read N- to C-terminus: 3'-5' ssDNA/RNA exonuclease TatD (260 aa).

Residues Glu92, His128, and His153 each coordinate a divalent metal cation.

It belongs to the metallo-dependent hydrolases superfamily. TatD-type hydrolase family. TatD subfamily. In terms of assembly, monomer. Mg(2+) serves as cofactor.

It is found in the cytoplasm. Functionally, 3'-5' exonuclease that prefers single-stranded DNA and RNA. May play a role in the H(2)O(2)-induced DNA damage repair. This is 3'-5' ssDNA/RNA exonuclease TatD from Pectobacterium atrosepticum (strain SCRI 1043 / ATCC BAA-672) (Erwinia carotovora subsp. atroseptica).